A 433-amino-acid chain; its full sequence is ATP-dependent protease ATPase subunit HslU (433 aa).

Residues Val18, 60–65 (GVGKTE), Asp246, Glu311, and Arg383 each bind ATP.

This sequence belongs to the ClpX chaperone family. HslU subfamily. In terms of assembly, a double ring-shaped homohexamer of HslV is capped on each side by a ring-shaped HslU homohexamer. The assembly of the HslU/HslV complex is dependent on binding of ATP.

The protein localises to the cytoplasm. Functionally, ATPase subunit of a proteasome-like degradation complex; this subunit has chaperone activity. The binding of ATP and its subsequent hydrolysis by HslU are essential for unfolding of protein substrates subsequently hydrolyzed by HslV. HslU recognizes the N-terminal part of its protein substrates and unfolds these before they are guided to HslV for hydrolysis. The protein is ATP-dependent protease ATPase subunit HslU of Rhodopseudomonas palustris (strain BisA53).